The following is a 2290-amino-acid chain: Armadillo repeat-containing X-linked protein 4 (2290 aa).

The chain crosses the membrane as a helical span at residues 7 to 24; the sequence is VGWVTAGLVIWAGTCYYI. Disordered regions lie at residues 517–549, 564–583, 967–988, 1014–1087, 1302–1430, 1521–1715, 1911–1931, and 1954–1973; these read QGEA…TCTQ, SRVD…TKAD, KVRG…VGSA, AVPK…ACRK, GSWA…ANSG, GSWG…RSED, SNTF…AGDN, and NENT…KSSE. Over residues 526 to 536 the composition is skewed to basic residues; sequence GKARGKAKAKC. Polar residues predominate over residues 1073–1087; sequence TSESEGGSGTQACRK. Gly residues-rich tracts occupy residues 1328 to 1341 and 1403 to 1414; these read SWAG…GGSM and AGAGGQAGGGSK. The segment covering 1419 to 1430 has biased composition (polar residues); sequence DQSSGRSWANSG. Gly residues predominate over residues 1521–1535; that stretch reads GSWGGASGQDVGGSR. Positions 1537–1558 are enriched in polar residues; that stretch reads GPTNQSSAGSWDSPGSQVSGSC. Gly residues-rich tracts occupy residues 1581 to 1598 and 1609 to 1623; these read IGGG…GGSR and GSWG…GGAR. The span at 1628 to 1645 shows a compositional bias: polar residues; sequence DQSSGGSWAGTGNQSSGR. The span at 1674-1687 shows a compositional bias: low complexity; that stretch reads GAGSQASGESWAGS. ARM repeat units lie at residues 2031-2071, 2073-2112, 2153-2192, and 2194-2234; these read RCKH…NSAD, SYSH…NISV, ITSE…NFSK, and PSMT…NINY.

The protein belongs to the eutherian X-chromosome-specific Armcx family.

Its subcellular location is the membrane. This is Armadillo repeat-containing X-linked protein 4 (ARMCX4) from Homo sapiens (Human).